The following is a 245-amino-acid chain: Probable transcriptional regulatory protein Ddes_0536 (245 aa).

The tract at residues 1–21 is disordered; the sequence is MAGHSKWANIQHRKGRQDAKR.

The protein belongs to the TACO1 family.

The protein localises to the cytoplasm. The sequence is that of Probable transcriptional regulatory protein Ddes_0536 from Desulfovibrio desulfuricans (strain ATCC 27774 / DSM 6949 / MB).